Consider the following 414-residue polypeptide: Histidine--tRNA ligase (414 aa).

The protein belongs to the class-II aminoacyl-tRNA synthetase family. As to quaternary structure, homodimer.

Its subcellular location is the cytoplasm. It carries out the reaction tRNA(His) + L-histidine + ATP = L-histidyl-tRNA(His) + AMP + diphosphate + H(+). This is Histidine--tRNA ligase from Anaeromyxobacter sp. (strain K).